The chain runs to 150 residues: Large ribosomal subunit protein bL9 (150 aa).

Belongs to the bacterial ribosomal protein bL9 family.

Functionally, binds to the 23S rRNA. The chain is Large ribosomal subunit protein bL9 from Shewanella halifaxensis (strain HAW-EB4).